We begin with the raw amino-acid sequence, 548 residues long: Splicing factor U2af large subunit B (548 aa).

Basic and acidic residues predominate over residues 1 to 82 (MADDHAAAAD…DRDRDRDKDR (82 aa)). A disordered region spans residues 1-156 (MADDHAAAAD…SKRVSGFDMA (156 aa)). Positions 83 to 93 (DRHHRHHRERR) are enriched in basic residues. A compositionally biased stretch (basic and acidic residues) spans 94-120 (EHRDRSDDHDRHRSRDSERRRDHERDG). The span at 121–149 (RRRHRSRSRSRSRGRDRRSRSRSRSKSKR) shows a compositional bias: basic residues. RRM domains are found at residues 214–297 (RRVY…RPTD), 334–412 (DRIF…RANQ), and 453–539 (QVVS…YPEN).

This sequence belongs to the splicing factor SR family.

The protein resides in the nucleus. In terms of biological role, necessary for the splicing of pre-mRNA. This chain is Splicing factor U2af large subunit B (U2AF65B), found in Oryza sativa subsp. japonica (Rice).